Reading from the N-terminus, the 254-residue chain is Alcohol dehydrogenase 2 (254 aa).

An NAD(+)-binding site is contributed by 10–33; the sequence is FVAGLGGIGLDTSREIVKSGPKNL. Residue Ser138 coordinates substrate. Catalysis depends on Tyr151, which acts as the Proton acceptor.

Belongs to the short-chain dehydrogenases/reductases (SDR) family. Homodimer.

The catalysed reaction is a primary alcohol + NAD(+) = an aldehyde + NADH + H(+). It catalyses the reaction a secondary alcohol + NAD(+) = a ketone + NADH + H(+). The sequence is that of Alcohol dehydrogenase 2 (Adh2) from Drosophila hydei (Fruit fly).